The sequence spans 105 residues: Small ribosomal subunit protein uS10 (105 aa).

The protein belongs to the universal ribosomal protein uS10 family. Part of the 30S ribosomal subunit.

In terms of biological role, involved in the binding of tRNA to the ribosomes. This chain is Small ribosomal subunit protein uS10, found in Rickettsia akari (strain Hartford).